We begin with the raw amino-acid sequence, 166 residues long: Gem-associated protein 6 (166 aa).

In terms of domain architecture, Sm spans 4–73 (WMKKGPLEWQ…VQTVEIVNEG (70 aa)). Residues 68 to 166 (EIVNEGDHSV…LIQGHLEASQ (99 aa)) form the AD domain. A phosphoserine mark is found at serine 94 and serine 165.

As to quaternary structure, part of the core SMN complex that contains SMN1, GEMIN2/SIP1, DDX20/GEMIN3, GEMIN4, GEMIN5, GEMIN6, GEMIN7, GEMIN8 and STRAP/UNRIP. Part of the SMN-Sm complex that contains SMN1, GEMIN2/SIP1, DDX20/GEMIN3, GEMIN4, GEMIN5, GEMIN6, GEMIN7, GEMIN8, STRAP/UNRIP and the Sm proteins SNRPB, SNRPD1, SNRPD2, SNRPD3, SNRPE, SNRPF and SNRPG. Interacts with GEMIN7; the interaction is direct. Interacts with GEMIN8; the interaction is direct. Interacts with SNRPB, SNRPD2, SNRPD3 and SNRPE; the interaction is direct.

It localises to the nucleus. It is found in the nucleoplasm. The protein localises to the gem. Its subcellular location is the cytoplasm. The SMN complex catalyzes the assembly of small nuclear ribonucleoproteins (snRNPs), the building blocks of the spliceosome, and thereby plays an important role in the splicing of cellular pre-mRNAs. Most spliceosomal snRNPs contain a common set of Sm proteins SNRPB, SNRPD1, SNRPD2, SNRPD3, SNRPE, SNRPF and SNRPG that assemble in a heptameric protein ring on the Sm site of the small nuclear RNA to form the core snRNP (Sm core). In the cytosol, the Sm proteins SNRPD1, SNRPD2, SNRPE, SNRPF and SNRPG are trapped in an inactive 6S pICln-Sm complex by the chaperone CLNS1A that controls the assembly of the core snRNP. To assemble core snRNPs, the SMN complex accepts the trapped 5Sm proteins from CLNS1A forming an intermediate. Binding of snRNA inside 5Sm triggers eviction of the SMN complex, thereby allowing binding of SNRPD3 and SNRPB to complete assembly of the core snRNP. The sequence is that of Gem-associated protein 6 (GEMIN6) from Bos taurus (Bovine).